We begin with the raw amino-acid sequence, 458 residues long: UDP-N-acetylmuramate--L-alanine ligase (458 aa).

112 to 118 (GTHGKTT) contributes to the ATP binding site.

This sequence belongs to the MurCDEF family.

Its subcellular location is the cytoplasm. The catalysed reaction is UDP-N-acetyl-alpha-D-muramate + L-alanine + ATP = UDP-N-acetyl-alpha-D-muramoyl-L-alanine + ADP + phosphate + H(+). It functions in the pathway cell wall biogenesis; peptidoglycan biosynthesis. Cell wall formation. The polypeptide is UDP-N-acetylmuramate--L-alanine ligase (Syntrophotalea carbinolica (strain DSM 2380 / NBRC 103641 / GraBd1) (Pelobacter carbinolicus)).